A 129-amino-acid polypeptide reads, in one-letter code: UPF0102 protein amb4503 (129 aa).

It belongs to the UPF0102 family.

The polypeptide is UPF0102 protein amb4503 (Paramagnetospirillum magneticum (strain ATCC 700264 / AMB-1) (Magnetospirillum magneticum)).